The sequence spans 371 residues: Serine/threonine-protein kinase 17B (371 aa).

In terms of domain architecture, Protein kinase spans 33 to 293 (TLTPKELGRG…AESCLSHSWL (261 aa)). ATP-binding positions include 39 to 47 (LGRGKFAVV) and Lys-62. Asp-158 (proton acceptor) is an active-site residue. Residues 308 to 345 (SESSQTQDLSLRSSEDKTPKSCNGSCGDREDKENIPED) form a disordered region. Residues 309 to 319 (ESSQTQDLSLR) are compositionally biased toward polar residues.

It belongs to the protein kinase superfamily. CAMK Ser/Thr protein kinase family. DAP kinase subfamily. In terms of assembly, interacts with CHP1; the interaction induces CHP1 to translocate from the Golgi to the nucleus. Autophosphorylated. As to expression, highly expressed in thymus, spleen, and testis, lower levels present in the brain.

It localises to the nucleus. It is found in the cell membrane. Its subcellular location is the endoplasmic reticulum-Golgi intermediate compartment. The enzyme catalyses L-seryl-[protein] + ATP = O-phospho-L-seryl-[protein] + ADP + H(+). It catalyses the reaction L-threonyl-[protein] + ATP = O-phospho-L-threonyl-[protein] + ADP + H(+). Its function is as follows. Acts as a positive regulator of apoptosis. Phosphorylates myosin light chains. The sequence is that of Serine/threonine-protein kinase 17B (Stk17b) from Rattus norvegicus (Rat).